Consider the following 159-residue polypeptide: Putative 4-hydroxy-4-methyl-2-oxoglutarate aldolase (159 aa).

Substrate contacts are provided by residues 75–78 (GDQL) and R97. D98 contributes to the a divalent metal cation binding site.

This sequence belongs to the class II aldolase/RraA-like family. Homotrimer. A divalent metal cation serves as cofactor.

The catalysed reaction is 4-hydroxy-4-methyl-2-oxoglutarate = 2 pyruvate. It catalyses the reaction oxaloacetate + H(+) = pyruvate + CO2. Functionally, catalyzes the aldol cleavage of 4-hydroxy-4-methyl-2-oxoglutarate (HMG) into 2 molecules of pyruvate. Also contains a secondary oxaloacetate (OAA) decarboxylase activity due to the common pyruvate enolate transition state formed following C-C bond cleavage in the retro-aldol and decarboxylation reactions. The chain is Putative 4-hydroxy-4-methyl-2-oxoglutarate aldolase from Laribacter hongkongensis (strain HLHK9).